Consider the following 564-residue polypeptide: Proline--tRNA ligase (564 aa).

This sequence belongs to the class-II aminoacyl-tRNA synthetase family. ProS type 1 subfamily. In terms of assembly, homodimer.

It is found in the cytoplasm. It catalyses the reaction tRNA(Pro) + L-proline + ATP = L-prolyl-tRNA(Pro) + AMP + diphosphate. Catalyzes the attachment of proline to tRNA(Pro) in a two-step reaction: proline is first activated by ATP to form Pro-AMP and then transferred to the acceptor end of tRNA(Pro). As ProRS can inadvertently accommodate and process non-cognate amino acids such as alanine and cysteine, to avoid such errors it has two additional distinct editing activities against alanine. One activity is designated as 'pretransfer' editing and involves the tRNA(Pro)-independent hydrolysis of activated Ala-AMP. The other activity is designated 'posttransfer' editing and involves deacylation of mischarged Ala-tRNA(Pro). The misacylated Cys-tRNA(Pro) is not edited by ProRS. This is Proline--tRNA ligase from Xylella fastidiosa (strain 9a5c).